Reading from the N-terminus, the 147-residue chain is MRTTYMAKPNDVDRKWYIVDATDVSLGRLASVVASILRGKNKPTFTPNVDTGDNVIVINAEKVALTGRKASNKIYYHHTGFAGGLKSRTAGNFRDENPEKLIETSVQGMLPKNSLGHQMALKLHVYAGADHKHEAQKPEVLDITNLI.

It belongs to the universal ribosomal protein uL13 family. As to quaternary structure, part of the 50S ribosomal subunit.

Functionally, this protein is one of the early assembly proteins of the 50S ribosomal subunit, although it is not seen to bind rRNA by itself. It is important during the early stages of 50S assembly. The protein is Large ribosomal subunit protein uL13 of Levilactobacillus brevis (strain ATCC 367 / BCRC 12310 / CIP 105137 / JCM 1170 / LMG 11437 / NCIMB 947 / NCTC 947) (Lactobacillus brevis).